The chain runs to 223 residues: 7-cyano-7-deazaguanine synthase (223 aa).

12-22 lines the ATP pocket; sequence FSGGQDSTTCL. Positions 189, 198, 201, and 204 each coordinate Zn(2+).

Belongs to the QueC family. As to quaternary structure, homodimer. It depends on Zn(2+) as a cofactor.

The catalysed reaction is 7-carboxy-7-deazaguanine + NH4(+) + ATP = 7-cyano-7-deazaguanine + ADP + phosphate + H2O + H(+). It participates in purine metabolism; 7-cyano-7-deazaguanine biosynthesis. Its function is as follows. Catalyzes the ATP-dependent conversion of 7-carboxy-7-deazaguanine (CDG) to 7-cyano-7-deazaguanine (preQ(0)). In Halalkalibacterium halodurans (strain ATCC BAA-125 / DSM 18197 / FERM 7344 / JCM 9153 / C-125) (Bacillus halodurans), this protein is 7-cyano-7-deazaguanine synthase.